Here is a 157-residue protein sequence, read N- to C-terminus: SsrA-binding protein (157 aa).

Residues 134-151 (HDKRETEKKRDWSKEKGR) show a composition bias toward basic and acidic residues. Residues 134–157 (HDKRETEKKRDWSKEKGRLMRAKG) are disordered.

The protein belongs to the SmpB family.

Its subcellular location is the cytoplasm. Required for rescue of stalled ribosomes mediated by trans-translation. Binds to transfer-messenger RNA (tmRNA), required for stable association of tmRNA with ribosomes. tmRNA and SmpB together mimic tRNA shape, replacing the anticodon stem-loop with SmpB. tmRNA is encoded by the ssrA gene; the 2 termini fold to resemble tRNA(Ala) and it encodes a 'tag peptide', a short internal open reading frame. During trans-translation Ala-aminoacylated tmRNA acts like a tRNA, entering the A-site of stalled ribosomes, displacing the stalled mRNA. The ribosome then switches to translate the ORF on the tmRNA; the nascent peptide is terminated with the 'tag peptide' encoded by the tmRNA and targeted for degradation. The ribosome is freed to recommence translation, which seems to be the essential function of trans-translation. In Rhodopseudomonas palustris (strain BisA53), this protein is SsrA-binding protein.